A 71-amino-acid polypeptide reads, in one-letter code: Large ribosomal subunit protein bL31 (71 aa).

Zn(2+) contacts are provided by Cys16, Cys18, Cys37, and Cys40.

It belongs to the bacterial ribosomal protein bL31 family. Type A subfamily. As to quaternary structure, part of the 50S ribosomal subunit. It depends on Zn(2+) as a cofactor.

Binds the 23S rRNA. The polypeptide is Large ribosomal subunit protein bL31 (Mannheimia succiniciproducens (strain KCTC 0769BP / MBEL55E)).